Consider the following 557-residue polypeptide: Prosaposin (557 aa).

An N-terminal signal peptide occupies residues 1–16 (MYALALFASLLATALT). Residues 17–59 (SPVQDPKTCSGGSAVLCRDVKTAVDCGAVKHCQQMVWSKPTAK) constitute a propeptide that is removed on maturation. The Saposin A-type 1 domain maps to 18–58 (PVQDPKTCSGGSAVLCRDVKTAVDCGAVKHCQQMVWSKPTA). 4 consecutive Saposin B-type domains span residues 59 to 142 (KSLP…QSLQ), 193 to 277 (NEDV…NEVK), 313 to 394 (NVIL…AARP), and 438 to 519 (NGGF…PSAY). 3 cysteine pairs are disulfide-bonded: Cys63-Cys138, Cys66-Cys132, and Cys94-Cys106. An N-linked (GlcNAc...) asparagine glycan is attached at Asn80. The propeptide occupies 143 to 193 (EYLAEQNQKQLESNKIPEVDMARVVAPFMSNIPLLLYPQDHPRSQPQPKAN). Disulfide bonds link Cys197/Cys273, Cys200/Cys267, and Cys229/Cys240. N-linked (GlcNAc...) asparagine glycosylation occurs at Asn214. Positions 277–312 (KRVPMKTLVPATETIKNILPALEMMDPYEQNLVQAH) are excised as a propeptide. 3 disulfide bridges follow: Cys317/Cys390, Cys320/Cys384, and Cys348/Cys359. Asn334 is a glycosylation site (N-linked (GlcNAc...) asparagine). Positions 393–437 (RPELVEALEQPAPAIVSALLKEPTPPKQPAQPKQSALPAHVPPQK) are excised as a propeptide. 3 cysteine pairs are disulfide-bonded: Cys442–Cys515, Cys445–Cys509, and Cys473–Cys484. Asn459 carries an N-linked (GlcNAc...) asparagine glycan. Residues 520–557 (KLLLGTEKCVWGPSYWCQNMETAARCNAVDHCKRHVWN) constitute a propeptide that is removed on maturation. In terms of domain architecture, Saposin A-type 2 spans 521–557 (LLLGTEKCVWGPSYWCQNMETAARCNAVDHCKRHVWN).

Saposin-B is a homodimer. Prosaposin exists as a roughly half-half mixture of monomers and disulfide-linked dimers. Monomeric prosaposin interacts (via C-terminus) with sortilin/SORT1, the interaction is required for targeting to lysosomes. Interacts with GRN; facilitates lysosomal delivery of progranulin from the extracellular space and the biosynthetic pathway.

It is found in the secreted. The protein localises to the lysosome. Its function is as follows. Behaves as a myelinotrophic and neurotrophic factor, these effects are mediated by its G-protein-coupled receptors, GPR37 and GPR37L1, undergoing ligand-mediated internalization followed by ERK phosphorylation signaling. Saposin-A and saposin-C stimulate the hydrolysis of glucosylceramide by beta-glucosylceramidase (EC 3.2.1.45) and galactosylceramide by beta-galactosylceramidase (EC 3.2.1.46). Saposin-C apparently acts by combining with the enzyme and acidic lipid to form an activated complex, rather than by solubilizing the substrate. In terms of biological role, saposin-B stimulates the hydrolysis of galacto-cerebroside sulfate by arylsulfatase A (EC 3.1.6.8), GM1 gangliosides by beta-galactosidase (EC 3.2.1.23) and globotriaosylceramide by alpha-galactosidase A (EC 3.2.1.22). Saposin-B forms a solubilizing complex with the substrates of the sphingolipid hydrolases. Functionally, saposin-D is a specific sphingomyelin phosphodiesterase activator (EC 3.1.4.12). Its function is as follows. Saposins are specific low-molecular mass non-enzymatic proteins, they participate in the lysosomal degradation of sphingolipids, which takes place by the sequential action of specific hydrolases. This chain is Prosaposin (Psap), found in Mus musculus (Mouse).